The chain runs to 208 residues: CASP-like protein 4A4 (208 aa).

Residues 1–53 are Cytoplasmic-facing; sequence MKELKDHVVVITYGPSSEASVTASPVSQQTPSLFAYSVTPSASRFSSRRASVH. The helical transmembrane segment at 54–74 threads the bilayer; sequence VIGLVLRFITMVLCFVSALSL. Residues 75 to 92 lie on the Extracellular side of the membrane; that stretch reads AVNVQRPSKRHLTQNSSS. The N-linked (GlcNAc...) asparagine glycan is linked to Asn89. A helical membrane pass occupies residues 93-113; sequence FASYPELLYCFGVAVIGFVYT. At 114-141 the chain is on the cytoplasmic side; the sequence is SLQTFKGVCDITHRGVLISEPLSDYISF. A helical transmembrane segment spans residues 142–162; sequence IFDQVICYLLVSSSSVAIAWI. Topologically, residues 163-176 are extracellular; sequence QHINEDAIKTLRNN. Asn175 carries an N-linked (GlcNAc...) asparagine glycan. A helical transmembrane segment spans residues 177-197; the sequence is SIVSVSMSFSAFLVLTLSGLL. At 198–208 the chain is on the cytoplasmic side; the sequence is SGYKLCKRFMW.

This sequence belongs to the Casparian strip membrane proteins (CASP) family. Homodimer and heterodimers.

The protein resides in the cell membrane. This is CASP-like protein 4A4 from Arabidopsis thaliana (Mouse-ear cress).